The following is a 692-amino-acid chain: Potassium-transporting ATPase ATP-binding subunit (692 aa).

4 helical membrane passes run 35 to 55, 64 to 84, 213 to 233, and 254 to 274; these read VMFI…KDLY, LQIS…EAIA, IALT…VMSL, and ILIS…LSAI. The 4-aspartylphosphate intermediate role is filled by aspartate 307. ATP-binding positions include aspartate 344, glutamate 348, 377 to 384, and lysine 400; that span reads FSASTKMS. Mg(2+)-binding residues include aspartate 523 and aspartate 527. 3 helical membrane-spanning segments follow: residues 592–612, 626–646, and 672–692; these read YFAI…VGPL, AVLS…PLAL, and MVIP…LGII.

It belongs to the cation transport ATPase (P-type) (TC 3.A.3) family. Type IA subfamily. The system is composed of three essential subunits: KdpA, KdpB and KdpC.

It is found in the cell inner membrane. The catalysed reaction is K(+)(out) + ATP + H2O = K(+)(in) + ADP + phosphate + H(+). Functionally, part of the high-affinity ATP-driven potassium transport (or Kdp) system, which catalyzes the hydrolysis of ATP coupled with the electrogenic transport of potassium into the cytoplasm. This subunit is responsible for energy coupling to the transport system and for the release of the potassium ions to the cytoplasm. This chain is Potassium-transporting ATPase ATP-binding subunit, found in Leptospira interrogans serogroup Icterohaemorrhagiae serovar Lai (strain 56601).